The following is a 63-amino-acid chain: Beta-defensin 3 (63 aa).

Residues 1 to 20 (MRIHYLLFSFLLVLLSPLSA) form the signal peptide. Residues 21–22 (FS) constitute a propeptide that is removed on maturation. 3 disulfide bridges follow: C31–C59, C38–C52, and C42–C60.

It belongs to the beta-defensin family.

The protein localises to the secreted. Has bactericidal activity. The polypeptide is Beta-defensin 3 (Defb3) (Rattus norvegicus (Rat)).